We begin with the raw amino-acid sequence, 442 residues long: GTPase HflX (442 aa).

The Hflx-type G domain maps to 186–362 (VLVALAGYTN…ALNRVVLKLP (177 aa)). GTP contacts are provided by residues 192–199 (GYTNAGKS), 217–221 (FTTLD), 238–241 (DTVG), 306–309 (NKID), and 341–343 (SAR). 2 residues coordinate Mg(2+): Ser199 and Thr219.

This sequence belongs to the TRAFAC class OBG-HflX-like GTPase superfamily. HflX GTPase family. In terms of assembly, monomer. Associates with the 50S ribosomal subunit. Mg(2+) is required as a cofactor.

The protein resides in the cytoplasm. GTPase that associates with the 50S ribosomal subunit and may have a role during protein synthesis or ribosome biogenesis. The polypeptide is GTPase HflX (Thermococcus kodakarensis (strain ATCC BAA-918 / JCM 12380 / KOD1) (Pyrococcus kodakaraensis (strain KOD1))).